We begin with the raw amino-acid sequence, 339 residues long: Dihydroorotate dehydrogenase (quinone) (339 aa).

Residues 62–66 and Thr-86 contribute to the FMN site; that span reads AGMDK. Lys-66 provides a ligand contact to substrate. Substrate is bound at residue 111–115; it reads NRMGF. Asn-139 and Asn-172 together coordinate FMN. Asn-172 is a binding site for substrate. Catalysis depends on Ser-175, which acts as the Nucleophile. Substrate is bound at residue Asn-177. Positions 217 and 245 each coordinate FMN. 246–247 serves as a coordination point for substrate; the sequence is NT. FMN-binding positions include Gly-268, Gly-297, and 318 to 319; that span reads YS.

Belongs to the dihydroorotate dehydrogenase family. Type 2 subfamily. As to quaternary structure, monomer. FMN is required as a cofactor.

It localises to the cell membrane. It carries out the reaction (S)-dihydroorotate + a quinone = orotate + a quinol. It participates in pyrimidine metabolism; UMP biosynthesis via de novo pathway; orotate from (S)-dihydroorotate (quinone route): step 1/1. Functionally, catalyzes the conversion of dihydroorotate to orotate with quinone as electron acceptor. This Shewanella piezotolerans (strain WP3 / JCM 13877) protein is Dihydroorotate dehydrogenase (quinone).